Reading from the N-terminus, the 305-residue chain is Probable cell division protein WhiA (305 aa).

The H-T-H motif DNA-binding region spans 272-305 (SIQQLADSLTVPITKSGVNHRLRKINKIADELTD).

The protein belongs to the WhiA family.

Functionally, involved in cell division and chromosome segregation. This is Probable cell division protein WhiA from Streptococcus suis (strain 98HAH33).